The chain runs to 178 residues: Fluoride-specific ion channel FluC 2 (178 aa).

Helical transmembrane passes span 25–45, 63–83, 97–117, and 129–149; these read PDIHLDIVLVVFCGGAIGTAI, FVANMLACFCYAGLTAYLAGA, GLGMGVCGGLSTMSTLALEGF, and IAYLLVTFALGLVCASAGVWA. The Na(+) site is built by G104 and S107.

This sequence belongs to the fluoride channel Fluc/FEX (TC 1.A.43) family.

The protein localises to the cell membrane. The catalysed reaction is fluoride(in) = fluoride(out). Its activity is regulated as follows. Na(+) is not transported, but it plays an essential structural role and its presence is essential for fluoride channel function. In terms of biological role, fluoride-specific ion channel. Important for reducing fluoride concentration in the cell, thus reducing its toxicity. In Bifidobacterium longum (strain NCC 2705), this protein is Fluoride-specific ion channel FluC 2.